A 217-amino-acid chain; its full sequence is GTP cyclohydrolase 1 (217 aa).

Cys109, His112, and Cys180 together coordinate Zn(2+).

It belongs to the GTP cyclohydrolase I family. As to quaternary structure, homomer.

It carries out the reaction GTP + H2O = 7,8-dihydroneopterin 3'-triphosphate + formate + H(+). Its pathway is cofactor biosynthesis; 7,8-dihydroneopterin triphosphate biosynthesis; 7,8-dihydroneopterin triphosphate from GTP: step 1/1. This chain is GTP cyclohydrolase 1, found in Aliivibrio salmonicida (strain LFI1238) (Vibrio salmonicida (strain LFI1238)).